An 899-amino-acid polypeptide reads, in one-letter code: Bifunctional uridylyltransferase/uridylyl-removing enzyme (899 aa).

The segment at 1-342 is uridylyltransferase; the sequence is MPQVDPDLFD…PGDAAGRVEP (342 aa). The segment at 343–705 is uridylyl-removing; that stretch reads LNERFQVRDG…TTQREFEGAT (363 aa). The HD domain maps to 461–583; the sequence is VDAHTLNLIK…VRDQTYLDYL (123 aa). 2 consecutive ACT domains span residues 706–789 and 816–899; these read QIFI…IIQR and ILEI…RISI.

This sequence belongs to the GlnD family. Mg(2+) is required as a cofactor.

The catalysed reaction is [protein-PII]-L-tyrosine + UTP = [protein-PII]-uridylyl-L-tyrosine + diphosphate. The enzyme catalyses [protein-PII]-uridylyl-L-tyrosine + H2O = [protein-PII]-L-tyrosine + UMP + H(+). With respect to regulation, uridylyltransferase (UTase) activity is inhibited by glutamine, while glutamine activates uridylyl-removing (UR) activity. Its function is as follows. Modifies, by uridylylation and deuridylylation, the PII regulatory proteins (GlnB and homologs), in response to the nitrogen status of the cell that GlnD senses through the glutamine level. Under low glutamine levels, catalyzes the conversion of the PII proteins and UTP to PII-UMP and PPi, while under higher glutamine levels, GlnD hydrolyzes PII-UMP to PII and UMP (deuridylylation). Thus, controls uridylylation state and activity of the PII proteins, and plays an important role in the regulation of nitrogen fixation and metabolism. The protein is Bifunctional uridylyltransferase/uridylyl-removing enzyme of Azotobacter vinelandii (strain DJ / ATCC BAA-1303).